A 641-amino-acid chain; its full sequence is DNA primase (641 aa).

The CHC2-type zinc finger occupies 41 to 65 (CPFHDEKSPSFQVSPSKGFFHCFGC). Residues 262–346 (SRAVVVEGYT…AAETYIAIAP (85 aa)) form the Toprim domain. Mg(2+)-binding residues include glutamate 268, aspartate 317, and aspartate 319. Residues 444–478 (RDRGGKGPAPDQRQRGGGPQQQAGPMTATPRGPAL) are disordered.

This sequence belongs to the DnaG primase family. In terms of assembly, monomer. Interacts with DnaB. The cofactor is Zn(2+). It depends on Mg(2+) as a cofactor.

The enzyme catalyses ssDNA + n NTP = ssDNA/pppN(pN)n-1 hybrid + (n-1) diphosphate.. In terms of biological role, RNA polymerase that catalyzes the synthesis of short RNA molecules used as primers for DNA polymerase during DNA replication. This is DNA primase from Streptomyces coelicolor (strain ATCC BAA-471 / A3(2) / M145).